The sequence spans 418 residues: UDP-N-acetylglucosamine 1-carboxyvinyltransferase (418 aa).

23 to 24 (KN) is a binding site for phosphoenolpyruvate. Arginine 93 contacts UDP-N-acetyl-alpha-D-glucosamine. Aspartate 117 acts as the Proton donor in catalysis. UDP-N-acetyl-alpha-D-glucosamine is bound by residues aspartate 305 and isoleucine 327.

This sequence belongs to the EPSP synthase family. MurA subfamily.

It is found in the cytoplasm. The enzyme catalyses phosphoenolpyruvate + UDP-N-acetyl-alpha-D-glucosamine = UDP-N-acetyl-3-O-(1-carboxyvinyl)-alpha-D-glucosamine + phosphate. Its pathway is cell wall biogenesis; peptidoglycan biosynthesis. In terms of biological role, cell wall formation. Adds enolpyruvyl to UDP-N-acetylglucosamine. The chain is UDP-N-acetylglucosamine 1-carboxyvinyltransferase from Corynebacterium jeikeium (strain K411).